Here is a 124-residue protein sequence, read N- to C-terminus: Large ribosomal subunit protein bL12 (124 aa).

The protein belongs to the bacterial ribosomal protein bL12 family. As to quaternary structure, homodimer. Part of the ribosomal stalk of the 50S ribosomal subunit. Forms a multimeric L10(L12)X complex, where L10 forms an elongated spine to which 2 to 4 L12 dimers bind in a sequential fashion. Binds GTP-bound translation factors.

Functionally, forms part of the ribosomal stalk which helps the ribosome interact with GTP-bound translation factors. Is thus essential for accurate translation. In Burkholderia cenocepacia (strain ATCC BAA-245 / DSM 16553 / LMG 16656 / NCTC 13227 / J2315 / CF5610) (Burkholderia cepacia (strain J2315)), this protein is Large ribosomal subunit protein bL12.